Consider the following 116-residue polypeptide: NADH-quinone oxidoreductase subunit A (116 aa).

A run of 3 helical transmembrane segments spans residues 3–23, 61–81, and 85–105; these read FTLL…ALGI, FAIL…WAVV, and LGVY…LGLA.

Belongs to the complex I subunit 3 family. As to quaternary structure, NDH-1 is composed of 14 different subunits. Subunits NuoA, H, J, K, L, M, N constitute the membrane sector of the complex.

The protein localises to the cell inner membrane. It catalyses the reaction a quinone + NADH + 5 H(+)(in) = a quinol + NAD(+) + 4 H(+)(out). In terms of biological role, NDH-1 shuttles electrons from NADH, via FMN and iron-sulfur (Fe-S) centers, to quinones in the respiratory chain. The immediate electron acceptor for the enzyme in this species is believed to be a menaquinone. Couples the redox reaction to proton translocation (for every two electrons transferred, four hydrogen ions are translocated across the cytoplasmic membrane), and thus conserves the redox energy in a proton gradient. This Phocaeicola vulgatus (strain ATCC 8482 / DSM 1447 / JCM 5826 / CCUG 4940 / NBRC 14291 / NCTC 11154) (Bacteroides vulgatus) protein is NADH-quinone oxidoreductase subunit A.